The chain runs to 322 residues: HPr kinase/phosphorylase (322 aa).

Catalysis depends on residues histidine 146 and lysine 167. 161–168 (GDSGLGKS) contributes to the ATP binding site. A Mg(2+)-binding site is contributed by serine 168. The Proton acceptor; for phosphorylation activity. Proton donor; for dephosphorylation activity role is filled by aspartate 185. The segment at 209 to 218 (LEVRGLGLLD) is important for the catalytic mechanism of both phosphorylation and dephosphorylation. Glutamate 210 contributes to the Mg(2+) binding site. Residue arginine 250 is part of the active site. The important for the catalytic mechanism of dephosphorylation stretch occupies residues 271 to 276 (QVAAGR).

The protein belongs to the HPrK/P family. In terms of assembly, homohexamer. It depends on Mg(2+) as a cofactor.

The catalysed reaction is [HPr protein]-L-serine + ATP = [HPr protein]-O-phospho-L-serine + ADP + H(+). It catalyses the reaction [HPr protein]-O-phospho-L-serine + phosphate + H(+) = [HPr protein]-L-serine + diphosphate. In terms of biological role, catalyzes the ATP- as well as the pyrophosphate-dependent phosphorylation of a specific serine residue in HPr, a phosphocarrier protein of the phosphoenolpyruvate-dependent sugar phosphotransferase system (PTS). HprK/P also catalyzes the pyrophosphate-producing, inorganic phosphate-dependent dephosphorylation (phosphorolysis) of seryl-phosphorylated HPr (P-Ser-HPr). This is HPr kinase/phosphorylase from Paraburkholderia phymatum (strain DSM 17167 / CIP 108236 / LMG 21445 / STM815) (Burkholderia phymatum).